A 149-amino-acid chain; its full sequence is Transcriptional repressor NrdR (149 aa).

The segment at 3-34 (CPFCSATDTKVIDSRLVAEGHQVRRRRECTEC) is a zinc-finger region. Positions 49-139 (PRVIKRDGSR…VYRAFEDVSE (91 aa)) constitute an ATP-cone domain.

Belongs to the NrdR family. The cofactor is Zn(2+).

Functionally, negatively regulates transcription of bacterial ribonucleotide reductase nrd genes and operons by binding to NrdR-boxes. This chain is Transcriptional repressor NrdR, found in Shewanella putrefaciens (strain CN-32 / ATCC BAA-453).